The chain runs to 267 residues: tRNA pseudouridine synthase A (267 aa).

Aspartate 51 functions as the Nucleophile in the catalytic mechanism. Residue tyrosine 109 participates in substrate binding.

Belongs to the tRNA pseudouridine synthase TruA family. Homodimer.

The enzyme catalyses uridine(38/39/40) in tRNA = pseudouridine(38/39/40) in tRNA. Its function is as follows. Formation of pseudouridine at positions 38, 39 and 40 in the anticodon stem and loop of transfer RNAs. This is tRNA pseudouridine synthase A from Staphylococcus aureus (strain bovine RF122 / ET3-1).